Here is a 354-residue protein sequence, read N- to C-terminus: MHLELNERRRRVLKAVIQQYIDTATPVASQDLARSLGVSSATVRNEMAALEDAGLLTHLHTSAGRLPTDAGYRFFVENLMDRAALSTQEQRMIQHQFYQIRSELNQWIHLAAAVLARTAQTAAVVTPPRAYESRFKHIELISINDALVLLVLVLHEGSVKQQTLPADPNTTQEQLSRIAGRINELCHEASAKAIANIAHNQSTNQPPLSSFEVLVIESVARAMQQFEEHVNELIHHDGLLEMLHQPEFGQVTRVREVLSILEGGTMLESLIPQALASDGVQVIIGGEHSRDELRDYSVILSRYGVNGDVAGVVGVLGPRRMAYPRSISSVRYIAGVMSDLMGDLYGERKIEPSE.

Belongs to the HrcA family.

Its function is as follows. Negative regulator of class I heat shock genes (grpE-dnaK-dnaJ and groELS operons). Prevents heat-shock induction of these operons. The protein is Heat-inducible transcription repressor HrcA of Herpetosiphon aurantiacus (strain ATCC 23779 / DSM 785 / 114-95).